Consider the following 560-residue polypeptide: Membrane protein insertase YidC (560 aa).

Residues 1–21 form a helical membrane-spanning segment; sequence MDIKRTILIAALAVVSYVMVL. The disordered stretch occupies residues 42 to 66; sequence VAPGLPDGVPAGNNGASADVPSANA. The next 5 helical transmembrane spans lie at 341 to 361, 367 to 387, 437 to 457, 468 to 488, and 515 to 535; these read LELT…FWLL, LLGN…GLFF, LGGC…YWVL, WILW…PIIM, and PIIF…YWVV.

It belongs to the OXA1/ALB3/YidC family. Type 1 subfamily. In terms of assembly, interacts with the Sec translocase complex via SecD. Specifically interacts with transmembrane segments of nascent integral membrane proteins during membrane integration.

It is found in the cell inner membrane. In terms of biological role, required for the insertion and/or proper folding and/or complex formation of integral membrane proteins into the membrane. Involved in integration of membrane proteins that insert both dependently and independently of the Sec translocase complex, as well as at least some lipoproteins. Aids folding of multispanning membrane proteins. This Pseudomonas putida (strain ATCC 700007 / DSM 6899 / JCM 31910 / BCRC 17059 / LMG 24140 / F1) protein is Membrane protein insertase YidC.